Here is a 283-residue protein sequence, read N- to C-terminus: tRNA pseudouridine synthase A (283 aa).

Asp73 (nucleophile) is an active-site residue. Residues 120–124 are RNA binding; sequence FHARF. Position 131 (Tyr131) interacts with substrate. Positions 181 to 185 are interaction with tRNA; sequence QCQSR.

This sequence belongs to the tRNA pseudouridine synthase TruA family. In terms of assembly, homodimer.

It catalyses the reaction uridine(38/39/40) in tRNA = pseudouridine(38/39/40) in tRNA. In terms of biological role, formation of pseudouridine at positions 38, 39 and 40 in the anticodon stem and loop of transfer RNAs. This is tRNA pseudouridine synthase A from Pectobacterium atrosepticum (strain SCRI 1043 / ATCC BAA-672) (Erwinia carotovora subsp. atroseptica).